Reading from the N-terminus, the 956-residue chain is Endogenous retrovirus group K member 6 Pol protein (956 aa).

The region spanning 57 to 245 is the Reverse transcriptase domain; sequence LEKGHIEPSF…TPFHYLGMQI (189 aa). The short motif at 161–164 is the LPQG element; sequence LPQG. The YXDD signature appears at 195-198; sequence CIDD. The RNase H type-1 domain occupies 460–590; sequence LENALTVFTD…ADLLVSSALI (131 aa). Positions 469, 497, 517, and 582 each coordinate Mg(2+). Residues 587–628 form an Integrase-type zinc finger; that stretch reads SALIKAQELHALTHVNAAGLKNKFDVTWKQAKDIVQHCTQCQ. Zn(2+) contacts are provided by His596, His600, Cys624, and Cys627. Residues 642 to 803 form the Integrase catalytic domain; the sequence is RGLCPNALWQ…TSAEQHLTGK (162 aa). A DNA-binding region (integrase-type) is located at residues 811-859; that stretch reads KLIWWKDNKNKTWEIGKVITWGRGFACVSPGENQLPVWIPTRHLKFYNE. The segment at 865-890 is disordered; sequence KKSTSAETETSQSSTVDSQDEQNGDV. Low complexity predominate over residues 869–879; it reads SAETETSQSST.

It belongs to the beta type-B retroviral polymerase family. HERV class-II K(HML-2) pol subfamily. Post-translationally, cleavage sites that yield the mature proteins remain to be determined.

The enzyme catalyses DNA(n) + a 2'-deoxyribonucleoside 5'-triphosphate = DNA(n+1) + diphosphate. The catalysed reaction is Endonucleolytic cleavage to 5'-phosphomonoester.. Its function is as follows. Early post-infection, the reverse transcriptase converts the viral RNA genome into double-stranded viral DNA. The RNase H domain of the reverse transcriptase performs two functions. It degrades the RNA template and specifically removes the RNA primer from the RNA/DNA hybrid. Following nuclear import, the integrase catalyzes the insertion of the linear, double-stranded viral DNA into the host cell chromosome. Endogenous Pol proteins may have kept, lost or modified their original function during evolution. The chain is Endogenous retrovirus group K member 6 Pol protein (ERVK-6) from Homo sapiens (Human).